A 483-amino-acid polypeptide reads, in one-letter code: Glutamyl-tRNA(Gln) amidotransferase subunit A (483 aa).

Active-site charge relay system residues include Lys-76 and Ser-151. The Acyl-ester intermediate role is filled by Ser-175.

It belongs to the amidase family. GatA subfamily. In terms of assembly, heterotrimer of A, B and C subunits.

The catalysed reaction is L-glutamyl-tRNA(Gln) + L-glutamine + ATP + H2O = L-glutaminyl-tRNA(Gln) + L-glutamate + ADP + phosphate + H(+). Functionally, allows the formation of correctly charged Gln-tRNA(Gln) through the transamidation of misacylated Glu-tRNA(Gln) in organisms which lack glutaminyl-tRNA synthetase. The reaction takes place in the presence of glutamine and ATP through an activated gamma-phospho-Glu-tRNA(Gln). This chain is Glutamyl-tRNA(Gln) amidotransferase subunit A, found in Pseudomonas putida (strain W619).